The primary structure comprises 238 residues: Small ribosomal subunit protein uS2c (238 aa).

This sequence belongs to the universal ribosomal protein uS2 family.

Its subcellular location is the plastid. The protein localises to the chloroplast. This Oltmannsiellopsis viridis (Marine flagellate) protein is Small ribosomal subunit protein uS2c (rps2).